We begin with the raw amino-acid sequence, 258 residues long: Acetylglutamate kinase (258 aa).

Residues 44-45 (GG), Arg66, and Asn158 each bind substrate. ATP contacts are provided by residues 181 to 186 (DISSIL) and 209 to 211 (IIT).

Belongs to the acetylglutamate kinase family. ArgB subfamily. As to quaternary structure, homodimer.

It localises to the cytoplasm. It carries out the reaction N-acetyl-L-glutamate + ATP = N-acetyl-L-glutamyl 5-phosphate + ADP. Its pathway is amino-acid biosynthesis; L-arginine biosynthesis; N(2)-acetyl-L-ornithine from L-glutamate: step 2/4. Functionally, catalyzes the ATP-dependent phosphorylation of N-acetyl-L-glutamate. This chain is Acetylglutamate kinase, found in Buchnera aphidicola subsp. Schizaphis graminum (strain Sg).